The chain runs to 249 residues: tRNA pseudouridine synthase A (249 aa).

The Nucleophile role is filled by D53. Y111 provides a ligand contact to substrate.

It belongs to the tRNA pseudouridine synthase TruA family. As to quaternary structure, homodimer.

The enzyme catalyses uridine(38/39/40) in tRNA = pseudouridine(38/39/40) in tRNA. Formation of pseudouridine at positions 38, 39 and 40 in the anticodon stem and loop of transfer RNAs. This is tRNA pseudouridine synthase A from Streptococcus suis (strain 98HAH33).